Consider the following 519-residue polypeptide: Na(+)/H(+) exchange regulatory cofactor NHE-RF3 (519 aa).

The region spanning 9–90 (ECKLSKQEGQ…SVTLLVLDGD (82 aa)) is the PDZ 1 domain. Residues Ser108, Ser148, Ser192, Ser250, Ser334, and Ser348 each carry the phosphoserine modification. PDZ domains follow at residues 128-215 (EPCA…VDKE) and 243-323 (VVVI…LDKE). The interval 348–374 (SVKEGPAPIPAPLEATGSEPTEDAEGH) is disordered. The PDZ 4 domain occupies 378-458 (LCRLLKEDDS…HVTLLVCGKM (81 aa)). Residues Thr451 and Thr488 each carry the phosphothreonine modification. Positions 479–519 (VAGPDEKGETSAESEHDAHPAKDRTLSTASHSSSNSEDTEM) are disordered. Positions 482-503 (PDEKGETSAESEHDAHPAKDRT) are enriched in basic and acidic residues. Phosphoserine occurs at positions 489 and 492. Residue Thr503 is modified to Phosphothreonine. Positions 505-519 (STASHSSSNSEDTEM) are enriched in low complexity. Phosphoserine is present on residues Ser508, Ser510, Ser511, Ser512, and Ser514.

Belongs to the NHER family. In terms of assembly, interacts with PDZK1IP1 and ABCC2. Binds to the C-terminal region of SLC26A3. Interacts (via C-terminal PDZ domain) with SLC26A6 (via C-terminal domain). Interacts (via C-terminal PDZ domain) with SLC9A3 (via C-terminal domain). Component of a complex, composed of PDZK1, SYNGAP1, KLHL17 and NMDA receptors. Interacts (via PDZ1 domain) directly with KLHL17; the interaction is important for integrity of actin cytoskeleton structures in neurons. Forms a heterodimeric complex with NHERF1. Interacts with AKAP2, BCR, CFTR, SLCO1A1, SLC22A12, SLC22A4, SLC22A5, SLC26A6, NHERF2 and SLC17A1. Interacts (via the first PDZ domain) with PTGIR (via non-isoprenylated C-terminus). Interacts (via PDZ domains 1 and 3) with SCARB1 (C-terminal domain). Interacts (via PDZ domains 1 and 3) with SLC5A8 (via PDZ-binding motif); interaction increases nicotinate transport activity of SLC5A8. Expressed in kidney, liver, small intestine. brain, lung, and testis (at protein level).

It localises to the membrane. It is found in the cell membrane. Its function is as follows. A scaffold protein that connects plasma membrane proteins and regulatory components, regulating their surface expression in epithelial cells apical domains. May be involved in the coordination of a diverse range of regulatory processes for ion transport and second messenger cascades. In complex with NHERF1, may cluster proteins that are functionally dependent in a mutual fashion and modulate the trafficking and the activity of the associated membrane proteins. May play a role in the cellular mechanisms associated with multidrug resistance through its interaction with ABCC2 and PDZK1IP1. May potentiate the CFTR chloride channel activity. Required for normal cell-surface expression of SCARB1. Plays a role in maintaining normal plasma cholesterol levels via its effects on SCARB1. Plays a role in the normal localization and function of the chloride-anion exchanger SLC26A6 to the plasma membrane in the brush border of the proximal tubule of the kidney. May be involved in the regulation of proximal tubular Na(+)-dependent inorganic phosphate cotransport therefore playing an important role in tubule function. This is Na(+)/H(+) exchange regulatory cofactor NHE-RF3 (Pdzk1) from Mus musculus (Mouse).